The sequence spans 757 residues: Exo-alpha-(1-&gt;6)-L-arabinopyranosidase (757 aa).

The active site involves Asp-232.

This sequence belongs to the glycosyl hydrolase 3 family. Homotetramer.

With respect to regulation, completely inhibited by Cu(2+) and Fe(2+). Catalyzes the hydrolysis of a non-reducing terminal alpha-L-arabinopyranosidic linkage in ginsenoside Rb2 (alpha-L-arabinopyranosyl-(1-&gt;6)-alpha-D-glucopyranosyl) to release alpha-D-glucopyranosyl (Rd). It is not able to hydrolyze alpha-L-arabinofuranosyl-(1-&gt;6)-alpha-D-glucopyranosyl (Rc). This Bifidobacterium breve (strain ACS-071-V-Sch8b) protein is Exo-alpha-(1-&gt;6)-L-arabinopyranosidase.